Consider the following 369-residue polypeptide: Anhydro-N-acetylmuramic acid kinase (369 aa).

Residue 12–19 participates in ATP binding; sequence GTSMDGVD.

This sequence belongs to the anhydro-N-acetylmuramic acid kinase family.

It carries out the reaction 1,6-anhydro-N-acetyl-beta-muramate + ATP + H2O = N-acetyl-D-muramate 6-phosphate + ADP + H(+). The protein operates within amino-sugar metabolism; 1,6-anhydro-N-acetylmuramate degradation. It functions in the pathway cell wall biogenesis; peptidoglycan recycling. Its function is as follows. Catalyzes the specific phosphorylation of 1,6-anhydro-N-acetylmuramic acid (anhMurNAc) with the simultaneous cleavage of the 1,6-anhydro ring, generating MurNAc-6-P. Is required for the utilization of anhMurNAc either imported from the medium or derived from its own cell wall murein, and thus plays a role in cell wall recycling. The protein is Anhydro-N-acetylmuramic acid kinase of Shewanella sp. (strain MR-4).